Here is a 280-residue protein sequence, read N- to C-terminus: DegV domain-containing protein SPy_1698/M5005_Spy1391 (280 aa).

In terms of domain architecture, DegV spans 3–280 (WKIVTDSGCD…DGGLLMGYEI (278 aa)). 2 residues coordinate hexadecanoate: serine 63 and serine 91.

Functionally, may bind long-chain fatty acids, such as palmitate, and may play a role in lipid transport or fatty acid metabolism. This Streptococcus pyogenes serotype M1 protein is DegV domain-containing protein SPy_1698/M5005_Spy1391.